The chain runs to 861 residues: Leucine--tRNA ligase (861 aa).

The 'HIGH' region signature appears at 42 to 52 (PYPSGRLHMGH). The 'KMSKS' region motif lies at 619–623 (KMSKS). Residue K622 coordinates ATP.

It belongs to the class-I aminoacyl-tRNA synthetase family.

Its subcellular location is the cytoplasm. The enzyme catalyses tRNA(Leu) + L-leucine + ATP = L-leucyl-tRNA(Leu) + AMP + diphosphate. This Haemophilus influenzae (strain PittEE) protein is Leucine--tRNA ligase.